Here is a 309-residue protein sequence, read N- to C-terminus: L-aminoadipate-semialdehyde dehydrogenase-phosphopantetheinyl transferase (309 aa).

CoA contacts are provided by residues Arg47, 86-91 (RTSKGK), and 108-111 (NISH). The Mg(2+) site is built by Asp129 and Glu181. 181-185 (ESFIK) is a binding site for CoA.

Belongs to the P-Pant transferase superfamily. AcpS family. As to quaternary structure, monomer. Mg(2+) is required as a cofactor.

It is found in the cytoplasm. It localises to the cytosol. It catalyses the reaction apo-[ACP] + CoA = holo-[ACP] + adenosine 3',5'-bisphosphate + H(+). The enzyme catalyses apo-[ACP] + acetyl-CoA = acetyl-[ACP] + adenosine 3',5'-bisphosphate + H(+). Functionally, catalyzes the post-translational modification of target proteins by phosphopantetheine. Can transfer the 4'-phosphopantetheine moiety from coenzyme A, regardless of whether the CoA is presented in the free thiol form or as an acetyl thioester, to a serine residue of a broad range of acceptors including the acyl carrier domain of FASN. This is L-aminoadipate-semialdehyde dehydrogenase-phosphopantetheinyl transferase (Aasdhppt) from Mus musculus (Mouse).